The primary structure comprises 243 residues: UPF0246 protein SUB1767 (243 aa).

Belongs to the UPF0246 family.

The sequence is that of UPF0246 protein SUB1767 from Streptococcus uberis (strain ATCC BAA-854 / 0140J).